The following is a 705-amino-acid chain: MQSDDRSVREGSDSSQTFLMKMAQPTGELTHPSQQQQLQLQQQSFQSIFGGASDTTEEIDTETDSNHRRPHSFGAAATTPAKLANKNVAPFLVKHIPEQYGPLGSRRTDKLEDLSSPNSKFCYRHRPDLKCRRQADEPSMDKLQRELETLPPSDQQGIAHVWSLFSAAPAKHRKLILQGIMAQCCFPQLSFVSATVRDLIRIDFLTALPPEISFKILCYLDTTSLCKAAQVSSRWRALADDDVVWHRMCEQHIHRKCKKCGWGLPLLERKRLRESKREIELRATTWDVSGPAQNAGGAECSAPHADDVITQKRKADSSDDETAIVKRHCSSLDARPEPDEDYYTTRYRPWKEVYKDRFKVGTNWKYGRCSTKVFKGHTNGVMCLQFEDNILATGSYDATIKIWDTETGEELRTLRGHQSGIRCLQFDDTKLISGSMDRSLKVWNWRTGECISTYTGHRGGVIGLHFDATILASASVDKTVKIWNFEDKSTFLLRGHTDWVNAVRVDTTSRTVFSASDDCTVRLWDLDTKACLRTFHGHVGQVQQVVPLPREFEFEDHDAECDNDNMSTTSGDTESNSLQATLGLESNATETSVFGPSFDNGRPAPPRYIVTSALDSTIRLWETTTGRCLRTFFGHLEGVWALGADTLRIVSGAEDRMVKIWDPRTGKCERTFTGHSGPVTCIGLGDSRFATGSEDCEVRMYSFRN.

Over residues M1–S12 the composition is skewed to basic and acidic residues. 2 disordered regions span residues M1 to Q42 and T55 to P80. Residues S33–Q42 show a composition bias toward low complexity. An F-box domain is found at I202–M248. 7 WD repeats span residues G376 to T413, G416 to T455, H457 to L493, G495 to H536, A588 to T631, G634 to T671, and G674 to N705.

Belongs to the WD repeat MET30/SCONB/SCON-2 family. As to quaternary structure, component of the SCF(sconB) E3 ubiquitin ligase complex.

The protein operates within protein modification; protein ubiquitination. Component of the SCF(sconB) E3 ubiquitin ligase complex involved in the regulation of sulfur metabolite repression, probably by mediating the inactivation or degradation of the metR transcription factor. The sequence is that of Probable E3 ubiquitin ligase complex SCF subunit sconB (sconB) from Aspergillus oryzae (strain ATCC 42149 / RIB 40) (Yellow koji mold).